The following is an 895-amino-acid chain: Protein translocase subunit SecA (895 aa).

Residues Gln-90, 108–112 (GEGKS), and Asp-498 contribute to the ATP site.

This sequence belongs to the SecA family.

It localises to the plastid. The protein localises to the chloroplast stroma. Its subcellular location is the chloroplast thylakoid membrane. The catalysed reaction is ATP + H2O + cellular proteinSide 1 = ADP + phosphate + cellular proteinSide 2.. Functionally, has a central role in coupling the hydrolysis of ATP to the transfer of proteins across the thylakoid membrane. The protein is Protein translocase subunit SecA of Cyanidium caldarium (Red alga).